Here is a 698-residue protein sequence, read N- to C-terminus: Serotransferrin (698 aa).

A signal peptide spans 1 to 19 (MRLAVGALLVCAVLGLCLA). 2 Transferrin-like domains span residues 25-347 (VRWC…NLRE) and 361-683 (VKWC…NLRK). 2 disulfide bridges follow: cysteine 28–cysteine 67 and cysteine 38–cysteine 58. Dimethylated arginine is present on arginine 42. The O-linked (GalNAc...) serine glycan is linked to serine 51. Positions 82 and 114 each coordinate Fe(3+). 17 disulfides stabilise this stretch: cysteine 137–cysteine 213, cysteine 156–cysteine 350, cysteine 177–cysteine 193, cysteine 180–cysteine 196, cysteine 190–cysteine 198, cysteine 246–cysteine 260, cysteine 358–cysteine 615, cysteine 364–cysteine 396, cysteine 374–cysteine 387, cysteine 421–cysteine 693, cysteine 437–cysteine 656, cysteine 469–cysteine 542, cysteine 493–cysteine 684, cysteine 503–cysteine 517, cysteine 514–cysteine 525, cysteine 582–cysteine 596, and cysteine 634–cysteine 639. Hydrogencarbonate is bound by residues threonine 139, arginine 143, alanine 145, and glycine 146. Tyrosine 207 is a binding site for Fe(3+). Histidine 268 contributes to the Fe(3+) binding site. Serine 389 is modified (phosphoserine). Aspartate 411 and tyrosine 445 together coordinate Fe(3+). Threonine 471, arginine 475, alanine 477, and glycine 478 together coordinate hydrogencarbonate. Fe(3+) is bound at residue tyrosine 536. Histidine 604 provides a ligand contact to Fe(3+). The N-linked (GlcNAc...) asparagine glycan is linked to asparagine 630. Serine 685 bears the Phosphoserine mark.

Belongs to the transferrin family. In terms of assembly, monomer. Part of a complex composed of SLC40A1/ferroportin, TF/transferrin and HEPH/hephaestin that transfers iron from cells to transferrin. As to expression, expressed by the liver and secreted in plasma.

The protein resides in the secreted. Functionally, transferrins are iron binding transport proteins which can bind two Fe(3+) ions in association with the binding of an anion, usually bicarbonate. It is responsible for the transport of iron from sites of absorption and heme degradation to those of storage and utilization. Serum transferrin may also have a further role in stimulating cell proliferation. The polypeptide is Serotransferrin (TF) (Pan troglodytes (Chimpanzee)).